The sequence spans 252 residues: Phosphate import ATP-binding protein PstB (252 aa).

The 242-residue stretch at M6–I247 folds into the ABC transporter domain. G38–S45 lines the ATP pocket.

This sequence belongs to the ABC transporter superfamily. Phosphate importer (TC 3.A.1.7) family. In terms of assembly, the complex is composed of two ATP-binding proteins (PstB), two transmembrane proteins (PstC and PstA) and a solute-binding protein (PstS).

The protein resides in the cell inner membrane. The enzyme catalyses phosphate(out) + ATP + H2O = ADP + 2 phosphate(in) + H(+). In terms of biological role, part of the ABC transporter complex PstSACB involved in phosphate import. Responsible for energy coupling to the transport system. This is Phosphate import ATP-binding protein PstB from Psychrobacter cryohalolentis (strain ATCC BAA-1226 / DSM 17306 / VKM B-2378 / K5).